An 871-amino-acid chain; its full sequence is Translation initiation factor IF-2 (871 aa).

The disordered stretch occupies residues 1-242; sequence MVDTKNPGDK…PAAKPAPAKQ (242 aa). Over residues 68-91 the composition is skewed to low complexity; it reads PASARTPAAKAPPARAATPAAPRA. Positions 115 to 174 are enriched in basic and acidic residues; sequence AKVRAEEERRIAEAEAARRNSKEGIEQAEREAAEARRKAEEERHRQEEEAKRKAEIEAKR. Low complexity-rich tracts occupy residues 182–206 and 225–241; these read KPAP…AVAA and ARPV…APAK. In terms of domain architecture, tr-type G spans 367–538; it reads PRSPVVTVMG…SLQADLLDLK (172 aa). Residues 376-383 are G1; the sequence is GHVDHGKT. 376 to 383 lines the GTP pocket; the sequence is GHVDHGKT. The segment at 401-405 is G2; that stretch reads GITQH. A G3 region spans residues 424–427; the sequence is DTPG. GTP contacts are provided by residues 424 to 428 and 478 to 481; these read DTPGH and NKID. The interval 478–481 is G4; that stretch reads NKID. The tract at residues 514 to 516 is G5; the sequence is SAK.

The protein belongs to the TRAFAC class translation factor GTPase superfamily. Classic translation factor GTPase family. IF-2 subfamily.

The protein localises to the cytoplasm. In terms of biological role, one of the essential components for the initiation of protein synthesis. Protects formylmethionyl-tRNA from spontaneous hydrolysis and promotes its binding to the 30S ribosomal subunits. Also involved in the hydrolysis of GTP during the formation of the 70S ribosomal complex. This Nitrobacter winogradskyi (strain ATCC 25391 / DSM 10237 / CIP 104748 / NCIMB 11846 / Nb-255) protein is Translation initiation factor IF-2.